Consider the following 224-residue polypeptide: 7-cyano-7-deazaguanine synthase (224 aa).

10–20 (VSGGLDSATVL) provides a ligand contact to ATP. Positions 189, 199, 202, and 205 each coordinate Zn(2+).

It belongs to the QueC family. The cofactor is Zn(2+).

It catalyses the reaction 7-carboxy-7-deazaguanine + NH4(+) + ATP = 7-cyano-7-deazaguanine + ADP + phosphate + H2O + H(+). The protein operates within purine metabolism; 7-cyano-7-deazaguanine biosynthesis. In terms of biological role, catalyzes the ATP-dependent conversion of 7-carboxy-7-deazaguanine (CDG) to 7-cyano-7-deazaguanine (preQ(0)). This is 7-cyano-7-deazaguanine synthase from Nitrosococcus oceani (strain ATCC 19707 / BCRC 17464 / JCM 30415 / NCIMB 11848 / C-107).